The primary structure comprises 496 residues: Ribose import ATP-binding protein RbsA (496 aa).

ABC transporter domains follow at residues 3–239 (IVME…VGRE) and 246–493 (ERTP…TGGN). An ATP-binding site is contributed by 35-42 (GENGAGKS).

Belongs to the ABC transporter superfamily. Ribose importer (TC 3.A.1.2.1) family. The complex is composed of an ATP-binding protein (RbsA), two transmembrane proteins (RbsC) and a solute-binding protein (RbsB).

It localises to the cell membrane. It catalyses the reaction D-ribose(out) + ATP + H2O = D-ribose(in) + ADP + phosphate + H(+). Part of the ABC transporter complex RbsABC involved in ribose import. Responsible for energy coupling to the transport system. The polypeptide is Ribose import ATP-binding protein RbsA (Oceanobacillus iheyensis (strain DSM 14371 / CIP 107618 / JCM 11309 / KCTC 3954 / HTE831)).